We begin with the raw amino-acid sequence, 717 residues long: F-box only protein 42 (717 aa).

The segment covering 1–30 (MASSSDSEDDSFMAVDQEETVLEGTMDQDE) has biased composition (acidic residues). The interval 1-34 (MASSSDSEDDSFMAVDQEETVLEGTMDQDEEPHP) is disordered. Residues 44–93 (NRSMSELPEEVLEYILSFLSPYQEHKTAALVCKQWYRLIKGVAHQCYHGF) enclose the F-box domain. Kelch repeat units lie at residues 132–184 (SMYV…VYKD), 186–242 (LVLF…VIDD), 244–293 (MIVF…VIDD), and 295–342 (TILI…LWCH). Positions 361–474 (RAPLSPSLNS…PSTPSAPEGY (114 aa)) are disordered. The span at 363–376 (PLSPSLNSRPSPIS) shows a compositional bias: low complexity. Phosphoserine occurs at positions 365 and 373. Position 378 is a phosphothreonine (Thr-378). Composition is skewed to polar residues over residues 416–426 (QRQTPSGSREG) and 455–469 (SLDS…STPS). Ser-552 carries the post-translational modification Phosphoserine. A compositionally biased stretch (low complexity) spans 570-596 (GPSASAALSPPLGSSPGSPGSQSLSSG). Residues 570 to 631 (GPSASAALSP…GHHPPQSLNV (62 aa)) are disordered.

In terms of assembly, component of some SCF complex, composed of CUL1, SKP1, RBX1 and FBXO42. Interacts (via the kelch domain) with p53/TP53; interaction is direct.

Its function is as follows. Substrate-recognition component of some SCF (SKP1-CUL1-F-box protein)-type E3 ubiquitin ligase complex. Specifically recognizes p53/TP53, promoting its ubiquitination and degradation. This is F-box only protein 42 (FBXO42) from Homo sapiens (Human).